The chain runs to 83 residues: Small ribosomal subunit protein eS27 (83 aa).

Residues 37–59 (CSGCFKISTVFSHATTVVVCVGC) form a C4-type zinc finger.

This sequence belongs to the eukaryotic ribosomal protein eS27 family. Zn(2+) is required as a cofactor.

The protein is Small ribosomal subunit protein eS27 (rps-27) of Caenorhabditis elegans.